The chain runs to 234 residues: uncharacterized protein (234 aa).

4 LRR repeats span residues 44–63, 64–84, 85–107, and 111–134; these read LEFLSKINGGLTSISDLPKL, KLRKLELRVSGGLEVLAEKCP, NLTHLYLSGNKIKDLSTIEPLKQ, and LKSLDLFNCEVTNLNDYGENVFKL. Residues 161–234 form a disordered region; that stretch reads EGLDDEEEGE…GEEERGQKRK (74 aa). A compositionally biased stretch (acidic residues) spans 163-226; that stretch reads LDDEEEGEHE…GEEDEEELGE (64 aa).

The protein belongs to the ANP32 family. As to expression, expressed in activated stem cells, such as mobilized CD34+ cells and cord blood CD34+ cells, but not in resting bone marrow CD34+ cells. Expressed in a variety of neoplastic cell lines, mainly in prostatic adenocarcinoma cell lines. Not expressed in normal prostatic tissue.

This is an uncharacterized protein from Homo sapiens (Human).